A 358-amino-acid chain; its full sequence is Insulin gene enhancer protein ISL-2A (358 aa).

LIM zinc-binding domains are found at residues 27-80 and 89-143; these read CVGC…CKRD and CANC…RADH. Positions 190 to 249 form a DNA-binding region, homeobox; sequence TTRVRTVLNEKQLHTLRTCYNANPRPDALMKEQLVEMTGLSPRVIRVWFQNKRCKDKKRS. Residues 325–335 show a composition bias toward low complexity; the sequence is ESGSMGNSSGS. Positions 325 to 358 are disordered; that stretch reads ESGSMGNSSGSDVTSLSSQLPDTPNSMVASPVDT. Polar residues predominate over residues 336 to 358; sequence DVTSLSSQLPDTPNSMVASPVDT.

Its subcellular location is the nucleus. Its function is as follows. Binds to one of the cis-acting domain of the insulin gene enhancer. May be involved in subtype specialization of primary motoneurons. The chain is Insulin gene enhancer protein ISL-2A (isl2a) from Oncorhynchus tshawytscha (Chinook salmon).